Reading from the N-terminus, the 487-residue chain is Histamine H1 receptor (487 aa).

Topologically, residues 1-29 (MSLPNSSCLLEDKMCEGNKTTMASPQLMP) are extracellular. N-linked (GlcNAc...) asparagine glycans are attached at residues Asn5 and Asn18. The chain crosses the membrane as a helical span at residues 30 to 50 (LVVVLSTICLVTVGLNLLVLY). Topologically, residues 51–64 (AVRSERKLHTVGNL) are cytoplasmic. The chain crosses the membrane as a helical span at residues 65–89 (YIVSLSVADLIVGAVVMPMNILYLL). The Extracellular portion of the chain corresponds to 90–97 (MSKWSLGR). The chain crosses the membrane as a helical span at residues 98–123 (PLCLFWLSMDYVASTASIFSVFILCI). Cysteines 100 and 180 form a disulfide. Histamine-binding residues include Asp107 and Thr112. The interval 107–112 (DYVAST) is important for agonist binding. At 124–144 (DRYRSVQQPLRYLKYRTKTRA) the chain is on the cytoplasmic side. 2 positions are modified to phosphothreonine: Thr140 and Thr142. A helical transmembrane segment spans residues 145–164 (SATILGAWFLSFLWVIPILG). The Extracellular portion of the chain corresponds to 165–188 (WNHFMQQTSVRREDKCETDFYDVT). A helical membrane pass occupies residues 189-211 (WFKVMTAIINFYLPTLLMLWFYA). Asn198 serves as a coordination point for histamine. The Cytoplasmic segment spans residues 212–416 (KIYKAVRQHC…MNRERKAAKQ (205 aa)). Ser230 carries the post-translational modification Phosphoserine. The span at 238-261 (KLRPENPKGDAKKPGKESPWEVLK) shows a compositional bias: basic and acidic residues. The disordered stretch occupies residues 238–291 (KLRPENPKGDAKKPGKESPWEVLKRKPKDAGGGSVLKSPSQTPKEMKSPVVFSQ). Thr279 carries the phosphothreonine modification. Phosphoserine occurs at positions 344 and 347. Positions 345-379 (EISEDQMLGDSQSFSRTDSDTTTETAPGKGKLRSG) are disordered. Over residues 353 to 369 (GDSQSFSRTDSDTTTET) the composition is skewed to polar residues. Phosphoserine occurs at positions 380, 396, and 398. The chain crosses the membrane as a helical span at residues 417-440 (LGFIMAAFILCWIPYFIFFMVIAF). The important for agonist binding stretch occupies residues 424-428 (FILCW). Tyr431 lines the histamine pocket. Cysteines 441 and 444 form a disulfide. The Extracellular segment spans residues 441 to 446 (CKNCCN). A helical transmembrane segment spans residues 447-469 (EHLHMFTIWLGYINSTLNPLIYP). Residues 470–487 (LCNENFKKTFKRILHIRS) lie on the Cytoplasmic side of the membrane.

Belongs to the G-protein coupled receptor 1 family. Phosphorylation at sites in the second and third cytoplasmic loops independently contribute to agonist-induced receptor down-regulation.

The protein localises to the cell membrane. G-protein-coupled receptor for histamine, a biogenic amine that functions as an immune modulator and a neurotransmitter. Through the H1 receptor, histamine mediates the contraction of smooth muscles and increases capillary permeability due to contraction of terminal venules. Also mediates neurotransmission in the central nervous system and thereby regulates circadian rhythms, emotional and locomotor activities as well as cognitive functions. In Homo sapiens (Human), this protein is Histamine H1 receptor.